The primary structure comprises 100 residues: Small ribosomal subunit protein uS14c (100 aa).

A disordered region spans residues 1 to 31 (MAKKSLIQREKKRQKLEQKYHSIRRSSKKEI).

This sequence belongs to the universal ribosomal protein uS14 family. In terms of assembly, part of the 30S ribosomal subunit.

The protein localises to the plastid. It localises to the chloroplast. Its function is as follows. Binds 16S rRNA, required for the assembly of 30S particles. The protein is Small ribosomal subunit protein uS14c of Atropa belladonna (Belladonna).